The chain runs to 89 residues: Large ribosomal subunit protein bL27 (89 aa).

Positions 1 to 21 (MAHKKAGGSSRNGRDSQSKRL) are disordered.

Belongs to the bacterial ribosomal protein bL27 family.

This Rhizobium rhizogenes (strain K84 / ATCC BAA-868) (Agrobacterium radiobacter) protein is Large ribosomal subunit protein bL27.